The primary structure comprises 1242 residues: Structural polyprotein (1242 aa).

The segment at 14–101 (WRPRMPPRPW…PKRKPGRRER (88 aa)) is disordered. Residues 26–42 (RMPTMQRPDQQARQMQQ) are compositionally biased toward low complexity. The interval 35–66 (QQARQMQQLIAAVSTLALRQNAAAPQRGKKKQ) is host transcription inhibition. A Nuclear localization signal motif is present at residues 59–96 (PQRGKKKQPRRKKPKPQPEKPKKQEQKPKQKKAPKRKP). Residues 61 to 73 (RGKKKQPRRKKPK) are compositionally biased toward basic residues. Over residues 74-86 (PQPEKPKKQEQKP) the composition is skewed to basic and acidic residues. The binding to the viral RNA stretch occupies residues 82 to 111 (QEQKPKQKKAPKRKPGRRERMCMKIEHDCI). Residues 87-98 (KQKKAPKRKPGR) are compositionally biased toward basic residues. Positions 96–110 (PGRRERMCMKIEHDC) are ribosome-binding. Cys110 and Cys125 form a disulfide bridge. Positions 110–258 (CIFEVKHEGK…KITPEGTVEW (149 aa)) constitute a Peptidase S3 domain. His136 acts as the Charge relay system in catalysis. The Nuclear export signal motif lies at 141-151 (IDNADLARLSY). Positions 152-157 (KKSSKY) are interaction with spike glycoprotein E2. Asp158 functions as the Charge relay system in the catalytic mechanism. A dimerization of the capsid protein region spans residues 180 to 190 (PEGHYNWHYGA). Ser210 functions as the Charge relay system in the catalytic mechanism. The tract at residues 216-220 (DNKGP) is dimerization of the capsid protein. The tract at residues 259 to 272 (AASTVTAMCLLTNI) is functions as an uncleaved signal peptide for the precursor of protein E3/E2. Cystine bridges form between Cys267/Cys276, Cys281/Cys285, Cys284/Cys316, Cys343/Cys449, Cys346/Cys352, Cys415/Cys429, Cys477/Cys589, and Cys527/Cys544. Asn271 is a glycosylation site (N-linked (GlcNAc...) asparagine; by host). At 325-690 (STANHFNAYK…YYYGLHPTTT (366 aa)) the chain is on the extracellular side. 2 interaction with host Mxra8 receptor regions span residues 350–353 (HSCH) and 386–388 (HDH). Interaction with host Mxra8 receptor stretches follow at residues 508–511 (QSGN) and 540–546 (TINSCTV). Asn586 is a glycosylation site (N-linked (GlcNAc...) asparagine; by host). Residues 691–711 (IVVVIRVSVVVLLSFAASVYM) traverse the membrane as a helical segment. At 712–746 (CVVARTKCLTPYALTPGAVVPVTIGVLCCAPKAHA) the chain is on the cytoplasmic side. Residues 714 to 718 (VARTK) form an interaction with the capsid protein region. 3 S-palmitoyl cysteine; by host lipidation sites follow: Cys719, Cys739, and Cys740. Positions 719–739 (CLTPYALTPGAVVPVTIGVLC) are transient transmembrane before p62-6K protein processing. Cysteines 719 and 740 form a disulfide. Over 747–761 (ASFAEGMAYLWDNNQ) the chain is Extracellular. N-linked (GlcNAc...) asparagine; by host glycosylation occurs at Asn760. Residues 762–782 (SMFWMELTGPLALLILATCCA) traverse the membrane as a helical segment. The Cytoplasmic segment spans residues 783 to 785 (RSL). A helical transmembrane segment spans residues 786–806 (LSCCKGSFLVAMSIGSAVASA). Topologically, residues 807–1217 (YEHTAIIPNQ…STAMTWAQHL (411 aa)) are extracellular. Cystine bridges form between Cys855–Cys920, Cys868–Cys900, Cys869–Cys902, and Cys874–Cys884. An E1 fusion peptide loop region spans residues 890–907 (VYPFMWGGAYCFCDSENT). 2 N-linked (GlcNAc...) asparagine; by host glycosylation sites follow: Asn947 and Asn1076. Cystine bridges form between Cys1065–Cys1077, Cys1107–Cys1180, Cys1112–Cys1184, and Cys1134–Cys1174. A helical transmembrane segment spans residues 1218 to 1238 (AGGVGLLIALAVLILVIVTCV). Cys1237 carries S-palmitoyl cysteine; by host lipidation. At 1239–1242 (TLRR) the chain is on the cytoplasmic side.

In terms of assembly, homodimer. Homomultimer. Interacts with host karyopherin KPNA4; this interaction allows the nuclear import of the viral capsid protein. Interacts with spike glycoprotein E2. Interacts with host IRAK1; the interaction leads to inhibition of IRAK1-dependent signaling. The precursor of protein E3/E2 and E1 form a heterodimer shortly after synthesis. As to quaternary structure, the precursor of protein E3/E2 and E1 form a heterodimer shortly after synthesis. Processing of the precursor of protein E3/E2 into E2 and E3 results in a heterodimer of the spike glycoproteins E2 and E1. Spike at virion surface are constituted of a trimer of E2-E1 heterodimers. After target cell attachment and endocytosis, E1 change conformation to form homotrimers. Interacts with 6K protein. In terms of assembly, interacts with spike glycoprotein E1. Processing of the precursor of protein E3/E2 into E2 and E3 results in a heterodimer of the spike glycoproteins E2 and E1. Spike at virion surface are constituted of a trimer of E2-E1 heterodimers. Interacts with 6K protein. Interacts with host MXRA8; this interaction mediates virus entry. Oligomer. Interacts with spike glycoprotein E1. Interacts with spike glycoprotein E2. In terms of processing, structural polyprotein: Specific enzymatic cleavages in vivo yield mature proteins. Capsid protein is auto-cleaved during polyprotein translation, unmasking a signal peptide at the N-terminus of the precursor of E3/E2. The remaining polyprotein is then targeted to the host endoplasmic reticulum, where host signal peptidase cleaves it into pE2, 6K and E1 proteins. pE2 is further processed to mature E3 and E2 by host furin in trans-Golgi vesicle. Palmitoylated via thioester bonds. These palmitoylations may induce disruption of the C-terminus transmembrane. This would result in the reorientation of E2 C-terminus from lumenal to cytoplasmic side. Post-translationally, N-glycosylated. In terms of processing, palmitoylated via thioester bonds.

The protein resides in the virion. It is found in the host cytoplasm. It localises to the host cell membrane. Its subcellular location is the host nucleus. The protein localises to the virion membrane. The protein resides in the host Golgi apparatus. It is found in the host trans-Golgi network. It localises to the host endoplasmic reticulum. The catalysed reaction is Autocatalytic release of the core protein from the N-terminus of the togavirus structural polyprotein by hydrolysis of a -Trp-|-Ser- bond.. Its function is as follows. Forms an icosahedral capsid with a T=4 symmetry composed of 240 copies of the capsid protein surrounded by a lipid membrane through which penetrate 80 spikes composed of trimers of E1-E2 heterodimers. The capsid protein binds to the viral RNA genome at a site adjacent to a ribosome binding site for viral genome translation following genome release. Possesses a protease activity that results in its autocatalytic cleavage from the nascent structural protein. Following its self-cleavage, the capsid protein transiently associates with ribosomes, and within several minutes the protein binds to viral RNA and rapidly assembles into icosahedric core particles. The resulting nucleocapsid eventually associates with the cytoplasmic domain of the spike glycoprotein E2 at the cell membrane, leading to budding and formation of mature virions. In case of infection, new virions attach to target cells and after clathrin-mediated endocytosis their membrane fuses with the host endosomal membrane. This leads to the release of the nucleocapsid into the cytoplasm, followed by an uncoating event necessary for the genomic RNA to become accessible. The uncoating might be triggered by the interaction of capsid proteins with ribosomes. Binding of ribosomes would release the genomic RNA since the same region is genomic RNA-binding and ribosome-binding. Specifically inhibits interleukin-1 receptor-associated kinase 1/IRAK1-dependent signaling during viral entry, representing a means by which the alphaviruses may evade innate immune detection and activation prior to viral gene expression. Provides the signal sequence for the translocation of the precursor of protein E3/E2 to the host endoplasmic reticulum. Furin-cleaved E3 remains associated with spike glycoprotein E1 and mediates pH protection of the latter during the transport via the secretory pathway. After virion release from the host cell, the assembly protein E3 is gradually released in the extracellular space. Functionally, plays a role in viral attachment to target host cell, by binding to the cell receptor MXRA8. Synthesized as a p62 precursor which is processed by furin at the cell membrane just before virion budding, giving rise to E2-E1 heterodimer. The p62-E1 heterodimer is stable, whereas E2-E1 is unstable and dissociate at low pH. p62 is processed at the last step, presumably to avoid E1 fusion activation before its final export to cell surface. E2 C-terminus contains a transitory transmembrane that would be disrupted by palmitoylation, resulting in reorientation of the C-terminal tail from lumenal to cytoplasmic side. This step is critical since E2 C-terminus is involved in budding by interacting with capsid proteins. This release of E2 C-terminus in cytoplasm occurs lately in protein export, and precludes premature assembly of particles at the endoplasmic reticulum membrane. In terms of biological role, acts as a viroporin that participates in virus glycoprotein processing and transport to the plasma membrane, cell permeabilization and budding of viral particles. Disrupts the calcium homeostasis of the cell, probably at the endoplasmic reticulum level. This leads to cytoplasmic calcium elevation. Because of its lipophilic properties, the 6K protein is postulated to influence the selection of lipids that interact with the transmembrane domains of the glycoproteins, which, in turn, affects the deformability of the bilayer required for the extreme curvature that occurs as budding proceeds. Present in low amount in virions, about 3% compared to viral glycoproteins. Its function is as follows. Class II viral fusion protein. Fusion activity is inactive as long as E1 is bound to E2 in mature virion. After virus attachment to target cell via host MXRA8 and endocytosis, acidification of the endosome induce dissociation of E1/E2 heterodimer and concomitant trimerization of the E1 subunits. This E1 trimer is fusion active, and promotes release of viral nucleocapsid in cytoplasm after endosome and viral membrane fusion. Efficient fusion requires the presence of cholesterol and sphingolipid in the target membrane. The chain is Structural polyprotein from Mayaro virus (strain Brazil) (MAYV).